A 301-amino-acid chain; its full sequence is Glycosyltransferase GlyG (301 aa).

This sequence belongs to the glycosyltransferase 2 family.

The protein operates within protein modification; protein glycosylation. Its function is as follows. Involved in the polymorphic O-glycosylation of the serine-rich repeat protein PsrP. Catalyzes the third step in glycosylation PsrP in this bacteria. Transfers glucose from UDP-glucose to the terminal glucose moiety of already-glycosylated PsrP (using truncated substrates with PsrP SSR1-GlcNAc-Glc). Has a marked preference for PsrP substrate that has already been modified by GlcNAc and glucose. In vitro has hydrolytic activity against UDP-glucose and to a lesser extent against UDP-galactose. Also catalyzes the fourth step in glycosylation of the serine-rich repeat protein PsrP in this bacteria. Can transfer the sugar from UDP-glucose (and much less well from UDP-galactose) to the terminal sugar moiety of PsrP-GlcNAc-Glc-Gal or of PsrP-GlcNAc-Glc-Glc. The chain is Glycosyltransferase GlyG from Streptococcus pneumoniae serotype 4 (strain ATCC BAA-334 / TIGR4).